Reading from the N-terminus, the 398-residue chain is Carbamoyl phosphate synthase small chain (398 aa).

The tract at residues 1–204 (MSPLLPSFPP…PAYGTLDTGK (204 aa)) is CPSase. The L-glutamine site is built by Ser53, Gly256, and Gly258. The Glutamine amidotransferase type-1 domain maps to 208–395 (KVVAYDFGVK…VELMNAASKK (188 aa)). Residue Cys284 is the Nucleophile of the active site. L-glutamine contacts are provided by Leu285, Gln288, Asn326, Gly328, and Phe329. Active-site residues include His368 and Glu370.

This sequence belongs to the CarA family. As to quaternary structure, composed of two chains; the small (or glutamine) chain promotes the hydrolysis of glutamine to ammonia, which is used by the large (or ammonia) chain to synthesize carbamoyl phosphate. Tetramer of heterodimers (alpha,beta)4.

The enzyme catalyses hydrogencarbonate + L-glutamine + 2 ATP + H2O = carbamoyl phosphate + L-glutamate + 2 ADP + phosphate + 2 H(+). It catalyses the reaction L-glutamine + H2O = L-glutamate + NH4(+). It functions in the pathway amino-acid biosynthesis; L-arginine biosynthesis; carbamoyl phosphate from bicarbonate: step 1/1. The protein operates within pyrimidine metabolism; UMP biosynthesis via de novo pathway; (S)-dihydroorotate from bicarbonate: step 1/3. In terms of biological role, small subunit of the glutamine-dependent carbamoyl phosphate synthetase (CPSase). CPSase catalyzes the formation of carbamoyl phosphate from the ammonia moiety of glutamine, carbonate, and phosphate donated by ATP, constituting the first step of 2 biosynthetic pathways, one leading to arginine and/or urea and the other to pyrimidine nucleotides. The small subunit (glutamine amidotransferase) binds and cleaves glutamine to supply the large subunit with the substrate ammonia. This chain is Carbamoyl phosphate synthase small chain, found in Polynucleobacter necessarius subsp. necessarius (strain STIR1).